A 177-amino-acid polypeptide reads, in one-letter code: MSRIGKKPVQVPAGITASVDGQKVTAKGPKGELFFVANDEIGLKLEDNAIVVTPLSNSKDARSKWGMSRTMIENILKGVKEGYERKLEINGVGYRAALQGKNLQLALGFSHDVVYEPPEGITIAVPKPTEIVVSGINKQQVGQVAAEIREYRGPEPYKGKGVKYAGERIVRKEGKKK.

It belongs to the universal ribosomal protein uL6 family. Part of the 50S ribosomal subunit.

Functionally, this protein binds to the 23S rRNA, and is important in its secondary structure. It is located near the subunit interface in the base of the L7/L12 stalk, and near the tRNA binding site of the peptidyltransferase center. In Rhizobium rhizogenes (strain K84 / ATCC BAA-868) (Agrobacterium radiobacter), this protein is Large ribosomal subunit protein uL6.